Here is a 362-residue protein sequence, read N- to C-terminus: mRNA decay activator protein ZFP36L2 (362 aa).

Over residues 100–109 the composition is skewed to basic and acidic residues; it reads SFSENGERSQ. Residues 100–126 form a disordered region; sequence SFSENGERSQHLLHLQQQQQQKAGAQV. Residues 111–120 show a composition bias toward low complexity; that stretch reads LLHLQQQQQQ. The RNA-binding signature appears at 130–135; sequence RYKTEL. 2 consecutive C3H1-type zinc fingers follow at residues 130–158 and 168–196; these read RYKT…HGFH and KYKT…HNAE. Positions 147–188 are RNA-binding; sequence YGEKCQFAHGFHELRSLTRHPKYKTELCRTFHTIGFCPYGPR. Disordered stretches follow at residues 225-244 and 306-362; these read DSPL…SSSS and SESP…ISDD. Over residues 327-346 the composition is skewed to low complexity; it reads YLSGSLSSGSLSGSDSPTLD.

In terms of processing, phosphorylated.

The protein resides in the nucleus. It is found in the cytoplasm. Functionally, zinc-finger RNA-binding protein that destabilizes several cytoplasmic AU-rich element (ARE)-containing mRNA transcripts by promoting their poly(A) tail removal or deadenylation, and hence provide a mechanism for attenuating protein synthesis. Acts as a 3'-untranslated region (UTR) ARE mRNA-binding adapter protein to communicate signaling events to the mRNA decay machinery. Functions by recruiting the CCR4-NOT deadenylase complex and probably other components of the cytoplasmic RNA decay machinery to the bound ARE-containing mRNAs, and hence promotes ARE-mediated mRNA deadenylation and decay processes. Binds to 3'-UTR ARE of numerous mRNAs. Also induces the degradation of ARE-containing mRNAs even in absence of poly(A) tail. Required for tubulogenesis during pronephros development. The protein is mRNA decay activator protein ZFP36L2 (zfp36l2) of Xenopus tropicalis (Western clawed frog).